Here is a 346-residue protein sequence, read N- to C-terminus: Leucine zipper protein 2 (346 aa).

Residues 1–19 (MKFSPAHYLLPLLPALVLS) form the signal peptide. A coiled-coil region spans residues 16-211 (LVLSTRQDYE…QMKAMKETVQ (196 aa)). Residue asparagine 133 is glycosylated (N-linked (GlcNAc...) asparagine). A leucine-zipper region spans residues 164-192 (LRYGKKDLLFKAQQLTDLEQKLAVAKNEL). The interval 225–346 (ALSLITSNPT…GMAAREEKIL (122 aa)) is disordered. Residues 250 to 261 (AAAKSKPQQSAS) are compositionally biased toward low complexity. A compositionally biased stretch (polar residues) spans 262-283 (GNNESSQVESTKEGSPSTTACD). Asparagine 264 carries N-linked (GlcNAc...) asparagine glycosylation. Residues 286 to 298 (DEGRTCSIKHKES) are compositionally biased toward basic and acidic residues. N-linked (GlcNAc...) asparagine glycosylation occurs at asparagine 302.

Its subcellular location is the secreted. In Pongo abelii (Sumatran orangutan), this protein is Leucine zipper protein 2 (LUZP2).